The sequence spans 375 residues: Paralyzed arrest at two-fold protein 6 (375 aa).

The disordered stretch occupies residues 1–51 (MSTLGRSKTPSRDEPKKPGVFEKLSGTLSRKKKAPEDEHGNQGGAHHATDE). The span at 10–20 (PSRDEPKKPGV) shows a compositional bias: basic and acidic residues. 2 consecutive Calponin-homology (CH) domains span residues 99–206 (AQVV…LHYR) and 266–373 (AHVK…TKYK).

Belongs to the parvin family. May interact (via calponin-homology (CH) 2 domain) with pat-4 (via kinase domain). May form a complex with unc-112 and pat-4. Component of an integrin containing attachment complex, composed of at least pat-2, pat-3, pat-4, pat-6, unc-52, unc-97 and unc-112. Expressed from 1.5 stage embryos, mostly within the muscle cells. In adult hermaphrodites, expressed in the attachments of other muscles, including the uterine, anal depressor, anal sphincter, and vulval muscles, as well as in the spermatheca and the distal tip cells. Expressed in mechanosensory receptor neurons ALML/R, PLML/R, AVM, and PVM. Localizes at body wall muscle attachments.

Its subcellular location is the cytoplasm. The protein localises to the cytoskeleton. It is found in the myofibril. The protein resides in the sarcomere. It localises to the m line. Its subcellular location is the perikaryon. The protein localises to the cell projection. It is found in the axon. In terms of biological role, involved in the regulation of cell adhesion and cytoskeleton organization. Component of an integrin containing attachment complex, which is required for muscle development and maintenance. During embryonic development, required to recruit cpna-1, unc-89 and myofilaments to newly forming integrin attachments composed of integrins pat-2/pat-3, pat-4 and unc-112. Also required to reposition the integrin-based attachments so that they form the highly ordered array of dense body and M-line attachments that are characteristic of mature muscle cells. During the formation of neuromuscular junctions at the larval stage, negatively regulates membrane protrusion from body wall muscles. This chain is Paralyzed arrest at two-fold protein 6, found in Caenorhabditis elegans.